Here is a 206-residue protein sequence, read N- to C-terminus: Ribosomal RNA large subunit methyltransferase E (206 aa).

Residues Gly-63, Trp-65, Asp-83, Asp-99, and Asp-124 each contribute to the S-adenosyl-L-methionine site. The active-site Proton acceptor is the Lys-164.

Belongs to the class I-like SAM-binding methyltransferase superfamily. RNA methyltransferase RlmE family.

The protein resides in the cytoplasm. The catalysed reaction is uridine(2552) in 23S rRNA + S-adenosyl-L-methionine = 2'-O-methyluridine(2552) in 23S rRNA + S-adenosyl-L-homocysteine + H(+). Its function is as follows. Specifically methylates the uridine in position 2552 of 23S rRNA at the 2'-O position of the ribose in the fully assembled 50S ribosomal subunit. The sequence is that of Ribosomal RNA large subunit methyltransferase E from Buchnera aphidicola subsp. Acyrthosiphon pisum (strain APS) (Acyrthosiphon pisum symbiotic bacterium).